The following is a 286-amino-acid chain: Alpha-ketoglutarate-dependent dioxygenase alkB homolog 3 (286 aa).

Residues 21-45 (QAIAQPATTAKSHLHQKPGQTWKNK) are disordered. Over residues 22 to 31 (AIAQPATTAK) the composition is skewed to polar residues. Substrate contacts are provided by residues Trp115 and 141–143 (YTY). A Fe2OG dioxygenase domain is found at 172–278 (TFNSLLCNLY…RVNLTFRTVY (107 aa)). A (4R)-5-hydroxyleucine; alternate modification is found at Leu177. A (4R)-5-oxoleucine; alternate modification is found at Leu177. 179-181 (NLY) lines the 2-oxoglutarate pocket. His191 and Asp193 together coordinate Fe cation. Asp194 lines the substrate pocket. Fe cation is bound at residue His257. Residues 269-275 (RVNLTFR) and Arg275 each bind 2-oxoglutarate.

Belongs to the alkB family. Interacts with the ASCC complex composed of ASCC1, ASCC2 and ASCC3. Interacts directly with ASCC3, and is thereby recruited to the ASCC complex. Interacts with OTUD4; the interaction is direct. Interacts with USP7 and USP9X. Requires Fe(2+) as cofactor. Ubiquitinated; undergoes 'Lys-48'-linked polyubiquitination. OTUD4 promotes USP7 and USP9X-dependent deubiquitination of 'Lys-48'-polyubiquitinated ALKBH3 promoting the repair of alkylated DNA lesions. In terms of tissue distribution, ubiquitous. Detected in heart, pancreas, skeletal muscle, thymus, testis, ovary, spleen, prostate, small intestine, peripheral blood leukocytes, urinary bladder and colon.

It localises to the nucleus. The protein resides in the cytoplasm. It carries out the reaction an N(1)-methyladenosine in mRNA + 2-oxoglutarate + O2 = an adenosine in mRNA + formaldehyde + succinate + CO2. The enzyme catalyses a methylated nucleobase within DNA + 2-oxoglutarate + O2 = a nucleobase within DNA + formaldehyde + succinate + CO2. The catalysed reaction is an N(1)-methyl-2'-deoxyadenosine in single-stranded DNA + 2-oxoglutarate + O2 = a 2'-deoxyadenosine in single-stranded DNA + formaldehyde + succinate + CO2 + H(+). It catalyses the reaction an N(3)-methyl-2'-deoxycytidine in single-stranded DNA + 2-oxoglutarate + O2 = a 2'-deoxycytidine in single-stranded DNA + formaldehyde + succinate + CO2 + H(+). It carries out the reaction a 3,N(4)-etheno-2'-deoxycytidine in single-stranded DNA + 2-oxoglutarate + O2 + H2O = a 2'-deoxycytidine in single-stranded DNA + glyoxal + succinate + CO2. Its activity is regulated as follows. Activated by ascorbate. In terms of biological role, dioxygenase that mediates demethylation of DNA and RNA containing 1-methyladenosine (m1A). Repairs alkylated DNA containing 1-methyladenosine (m1A) and 3-methylcytosine (m3C) by oxidative demethylation. Has a strong preference for single-stranded DNA. Able to process alkylated m3C within double-stranded regions via its interaction with ASCC3, which promotes DNA unwinding to generate single-stranded substrate needed for ALKBH3. Can repair exocyclic 3,N4-ethenocytosine adducs in single-stranded DNA. Also acts on RNA. Demethylates N(1)-methyladenosine (m1A) RNA, an epigenetic internal modification of messenger RNAs (mRNAs) highly enriched within 5'-untranslated regions (UTRs) and in the vicinity of start codons. Requires molecular oxygen, alpha-ketoglutarate and iron. This chain is Alpha-ketoglutarate-dependent dioxygenase alkB homolog 3, found in Homo sapiens (Human).